We begin with the raw amino-acid sequence, 423 residues long: MLPSFIFVYSLLATATATSPDWPEPWPSHWREPGSDLFPNQQVHLAVEEAGTGSGCRISNITSNEMAKGRTIVDFPLYAVGSLEEPKLQPLNSSGGEQWEFDGVSEDGMQSFIFGFYRDPNYAILGTGNLRVSIEFGFEDRTRFSEVYYAQRSVVETCSLGTRGLWVDKEAGWKFSFLVDAAMQEAIITLDSDTVKGRIIITSRAKPLAADGSTWPAENASTVTIPYYYWSQPIPAGTVETNVEIKGKLIKWKGMGGHERFWSSFSWFTCMRSLQAVRAMLGPYVLSYFSFTSNLIPDLTHQSVVLFHDGAVVFRSTLGTPSETEDYATVTKTYGGATTGTLKDKVTGFQLELVSPSKMRHYTFFVEHLNVGFEYILGEGVGGSGFSSQSRGGHVGLDQHEGVALTEALTFPKNSPLFRSNYV.

The signal sequence occupies residues 1-17 (MLPSFIFVYSLLATATA). N-linked (GlcNAc...) asparagine glycosylation is found at Asn-60, Asn-92, and Asn-219.

Belongs to the Diels-Alderase family.

It functions in the pathway mycotoxin biosynthesis. Diels-Alderase; part of the gene cluster that mediates the biosynthesis of the mycotoxin pyrichalasin H, a tyrosine-derived cytochalasan that inhibits the growth of rice seedlings, but also inhibits lymphocyte capping and actin polymerization and alters cell morphology. Pyrichalasin H is indicated as the responsible agent for the genus-specific pathogenicity of M.grisea toward crabgrass. The first step in the pathway is catalyzed by the O-methyltransferase pyiA which methylates free tyrosine to generate the precursor O-methyltyrosine. The hybrid PKS-NRPS pyiS, assisted by the enoyl reductase pyiC, are responsible for fusion of the O-methyltyrosine precursor and the polyketide backbone. The polyketide synthase module (PKS) of pyiS is responsible for the synthesis of the polyketide backbone and the downstream nonribosomal peptide synthetase (NRPS) amidates the carboxyl end of the polyketide with the O-methyltyrosine precursor. As the NRPS A-domain demonstrates substrate tolerance, pyiS can also use phenylalanine, tyrosine and even para-chlorophenylalanine as amino acid precursor, which leads to the production of novel cytochalasans, including halogenated cytochalasans. Because pyiS lacks a designated enoylreductase (ER) domain, the required activity is provided the enoyl reductase pyiC. Reduction by the hydrolyase pyiE leads to 1,5-dihydropyrrolone, which is substrate for dehydration and intra-molecular Diels-Alder cyclization by the Diels-Alderase pyiF to yield the required isoindolone-fused macrocycle. The tailoring cytochrome P450 monooxygenases piyD and piyG catalyze the hydroxylation at C-18 and C-7, respectivily, whereas the short-chain dehydrogenase/reductase pyiH reduces the carbonyl at C-21 in preparation for the transfer of an acetyl group by the acetyltransferase pyiB. These 3 reactions whose order is not clear yet, lead to the production of O-methylpyrichalasin J, a deacetylated pyrichalasin H. Finally, pyiB to converts O-methylpyrichalasin J into the final product pyrichalasin H via acetylation of C-21. The polypeptide is Diels-Alderase pyiF (Pyricularia grisea (Crabgrass-specific blast fungus)).